The sequence spans 126 residues: Gas vesicle protein J (126 aa).

It belongs to the gas vesicle GvpA family. Interacts with GvpA.

It localises to the gas vesicle. Its function is as follows. A minor component of the gas vesicle, might be involved in nucleating gas vesicle formation. Gas vesicles (GV) are hollow, gas filled proteinaceous nanostructures. During planktonic growth they allow positioning of the organism at a favorable depth for light or nutrient acquisition. The sequence is that of Gas vesicle protein J from Pseudanabaena galeata (strain PCC 6901).